A 200-amino-acid chain; its full sequence is Claudin-11 (200 aa).

Residue M1 is a topological domain, cytoplasmic. Residues 2–22 (VATCLQVVGFVTSFVGWIGVI) form a helical membrane-spanning segment. The Extracellular portion of the chain corresponds to 23-75 (VTTSTNDWVVTCGYTIPTCRKLDELGSKGLWADCVMATGLYHCKPLVDILPCR). Residues 76–96 (ALMIAASVLGLPAILLLLTVL) traverse the membrane as a helical segment. Over 97-115 (PCIRMGQEPGVAKYRRAQL) the chain is Cytoplasmic. A helical transmembrane segment spans residues 116–136 (AGVLLILLALCAIVATIWFPV). The Extracellular portion of the chain corresponds to 137–150 (CAHRETTIVSFGYS). A helical membrane pass occupies residues 151–171 (LYAGWIGAVLCLVGGCVILCC). The Cytoplasmic segment spans residues 172–200 (AGDAQAFGENRFYYTAGSSSPTHAKSAHV). A phosphoserine mark is found at S190 and S191.

The protein belongs to the claudin family. As to quaternary structure, interacts with tetraspanin-3/TSPAN3. Interacts with OCLN.

It is found in the cell junction. Its subcellular location is the tight junction. It localises to the cell membrane. Its function is as follows. Plays a major role in tight junction-specific obliteration of the intercellular space, through calcium-independent cell-adhesion activity. The protein is Claudin-11 (CLDN11) of Pongo abelii (Sumatran orangutan).